We begin with the raw amino-acid sequence, 485 residues long: Glutamyl-tRNA(Gln) amidotransferase subunit A (485 aa).

Active-site charge relay system residues include Lys-78 and Ser-153. Catalysis depends on Ser-177, which acts as the Acyl-ester intermediate.

The protein belongs to the amidase family. GatA subfamily. As to quaternary structure, heterotrimer of A, B and C subunits.

It catalyses the reaction L-glutamyl-tRNA(Gln) + L-glutamine + ATP + H2O = L-glutaminyl-tRNA(Gln) + L-glutamate + ADP + phosphate + H(+). Functionally, allows the formation of correctly charged Gln-tRNA(Gln) through the transamidation of misacylated Glu-tRNA(Gln) in organisms which lack glutaminyl-tRNA synthetase. The reaction takes place in the presence of glutamine and ATP through an activated gamma-phospho-Glu-tRNA(Gln). In Pelobacter propionicus (strain DSM 2379 / NBRC 103807 / OttBd1), this protein is Glutamyl-tRNA(Gln) amidotransferase subunit A.